Consider the following 315-residue polypeptide: Prephenate dehydratase (315 aa).

Residues 3-189 (RIAYLGPEGT…ARTRFLLIGV (187 aa)) form the Prephenate dehydratase domain. Residues 203 to 280 (SAVLRIANVP…ADVRYLGSWP (78 aa)) enclose the ACT domain.

In terms of assembly, homodimer.

The catalysed reaction is prephenate + H(+) = 3-phenylpyruvate + CO2 + H2O. The protein operates within amino-acid biosynthesis; L-phenylalanine biosynthesis; phenylpyruvate from prephenate: step 1/1. The chain is Prephenate dehydratase (pheA) from Mycobacterium ulcerans (strain Agy99).